Consider the following 401-residue polypeptide: MNEDYILIRFGEISTKGKNRKLFVDRLKRNIKMVLRDFRNVRYESTRDRMTLVLNGEDAEAVMARLKHVFGIQSFSLAVKCRTDLESIKETALASVQEQYKPGDTFKVSTKRAYKQFELNTNEMNAEIGGHILRNTDDLTVDVHSPDIHLRIEIREDATYLTFRDEKGAGGLPVGSGGKAMLMISGGIDSPVAGFYAMKRGLEIEAVHFFSPPYTSERAKQKVIDLTKRLTAFGGDIKLHIVPFTKTQELIQKQIPENYSMTATRRLMLQIADKLRERHNALAIFTGESLGQVASQTLESMYAINAVTSTPVLRPLIGMDKTEIIEKAKEIDTYDISIRPYEDCCTIFTPSAPKTRPKKEKIEHFESYTDFEPLINEAVENTETIVLSSKAETKDQFADFF.

The 106-residue stretch at 60–165 (EAVMARLKHV…EDATYLTFRD (106 aa)) folds into the THUMP domain. Residues 183–184 (MI), 208–209 (HF), Arg-265, Gly-287, and Gln-296 each bind ATP.

The protein belongs to the ThiI family.

Its subcellular location is the cytoplasm. The catalysed reaction is [ThiI sulfur-carrier protein]-S-sulfanyl-L-cysteine + a uridine in tRNA + 2 reduced [2Fe-2S]-[ferredoxin] + ATP + H(+) = [ThiI sulfur-carrier protein]-L-cysteine + a 4-thiouridine in tRNA + 2 oxidized [2Fe-2S]-[ferredoxin] + AMP + diphosphate. It catalyses the reaction [ThiS sulfur-carrier protein]-C-terminal Gly-Gly-AMP + S-sulfanyl-L-cysteinyl-[cysteine desulfurase] + AH2 = [ThiS sulfur-carrier protein]-C-terminal-Gly-aminoethanethioate + L-cysteinyl-[cysteine desulfurase] + A + AMP + 2 H(+). The protein operates within cofactor biosynthesis; thiamine diphosphate biosynthesis. Functionally, catalyzes the ATP-dependent transfer of a sulfur to tRNA to produce 4-thiouridine in position 8 of tRNAs, which functions as a near-UV photosensor. Also catalyzes the transfer of sulfur to the sulfur carrier protein ThiS, forming ThiS-thiocarboxylate. This is a step in the synthesis of thiazole, in the thiamine biosynthesis pathway. The sulfur is donated as persulfide by IscS. This chain is Probable tRNA sulfurtransferase, found in Bacillus licheniformis (strain ATCC 14580 / DSM 13 / JCM 2505 / CCUG 7422 / NBRC 12200 / NCIMB 9375 / NCTC 10341 / NRRL NRS-1264 / Gibson 46).